An 84-amino-acid chain; its full sequence is Large ribosomal subunit protein bL31B (84 aa).

This sequence belongs to the bacterial ribosomal protein bL31 family. Type B subfamily. As to quaternary structure, part of the 50S ribosomal subunit.

In Rhodococcus erythropolis (strain PR4 / NBRC 100887), this protein is Large ribosomal subunit protein bL31B.